The chain runs to 536 residues: Inactive beta-amylase 9 (536 aa).

S47 is modified (phosphoserine). The tract at residues 511 to 536 (QASEAEVEAETASIGSGTGAPSLQTA) is disordered.

It belongs to the glycosyl hydrolase 14 family. In terms of tissue distribution, mostly expressed in young floral buds, flowers and roots, and, to a later extent, in stems and leaves.

It localises to the cytoplasm. The chain is Inactive beta-amylase 9 (BAM9) from Arabidopsis thaliana (Mouse-ear cress).